We begin with the raw amino-acid sequence, 302 residues long: 1,2-dihydroxynaphthalene dioxygenase (302 aa).

VOC domains lie at 9–124 (ELGY…IFWG) and 149–270 (GLGH…PGWR). Position 152 (His152) interacts with Fe cation. Residues His152, 199 to 200 (DH), His215, and Tyr256 contribute to the substrate site. His215 serves as a coordination point for Fe cation. Glu266 contacts Fe cation.

It belongs to the extradiol ring-cleavage dioxygenase family. The cofactor is Fe(2+).

The catalysed reaction is naphthalene-1,2-diol + O2 = 2-hydroxychromene-2-carboxylate + H(+). The protein operates within aromatic compound metabolism; naphthalene degradation. Its function is as follows. Involved in the naphthalene catabolic pathway. Catalyzes the meta-cleavage of 1,2-dihydroxynaphthalene (1,2-DHN) to yield 2-hydroxychromene-2-carboxylic acid. This Pseudomonas putida (Arthrobacter siderocapsulatus) protein is 1,2-dihydroxynaphthalene dioxygenase (nahC).